Consider the following 469-residue polypeptide: GTPase Der (469 aa).

2 EngA-type G domains span residues 3–166 (PVIA…PEDE) and 177–350 (LRLA…ESAN). Residues 9 to 16 (GRPNVGKS), 56 to 60 (DTGGI), 118 to 121 (NKVD), 183 to 190 (GRPNVGKS), 230 to 234 (DTAGV), and 295 to 298 (NKWD) each bind GTP. The region spanning 351–435 (LKVSPAKLTQ…PVKIEFKTSE (85 aa)) is the KH-like domain.

It belongs to the TRAFAC class TrmE-Era-EngA-EngB-Septin-like GTPase superfamily. EngA (Der) GTPase family. As to quaternary structure, associates with the 50S ribosomal subunit.

In terms of biological role, GTPase that plays an essential role in the late steps of ribosome biogenesis. The protein is GTPase Der of Acinetobacter baumannii (strain ACICU).